Here is a 157-residue protein sequence, read N- to C-terminus: Small ribosomal subunit protein uS7 (157 aa).

This sequence belongs to the universal ribosomal protein uS7 family. As to quaternary structure, part of the 30S ribosomal subunit. Contacts proteins S9 and S11.

In terms of biological role, one of the primary rRNA binding proteins, it binds directly to 16S rRNA where it nucleates assembly of the head domain of the 30S subunit. Is located at the subunit interface close to the decoding center, probably blocks exit of the E-site tRNA. This Borrelia hermsii (strain HS1 / DAH) protein is Small ribosomal subunit protein uS7.